Consider the following 84-residue polypeptide: U4-theraphotoxin-Hhn1b (84 aa).

Positions 1–22 (MKVTLTAILTCAAVLVLHTTAA) are cleaved as a signal peptide. The propeptide occupies 23–47 (EELEESQLMEVGMPDTELAAVDEER). 3 cysteine pairs are disulfide-bonded: Cys51/Cys65, Cys55/Cys76, and Cys70/Cys81.

This sequence belongs to the neurotoxin 12 (Hwtx-2) family. 02 (Hwtx-2) subfamily. Expressed by the venom gland.

It is found in the secreted. Postsynaptic neurotoxin. This Cyriopagopus hainanus (Chinese bird spider) protein is U4-theraphotoxin-Hhn1b.